A 603-amino-acid polypeptide reads, in one-letter code: Threonine--tRNA ligase (603 aa).

Residues 209-500 (DHRKLGNEMK…LIEHCAGELP (292 aa)) form a catalytic region. Positions 301, 352, and 477 each coordinate Zn(2+).

Belongs to the class-II aminoacyl-tRNA synthetase family. As to quaternary structure, homodimer. The cofactor is Zn(2+).

It localises to the cytoplasm. It carries out the reaction tRNA(Thr) + L-threonine + ATP = L-threonyl-tRNA(Thr) + AMP + diphosphate + H(+). In terms of biological role, catalyzes the attachment of threonine to tRNA(Thr) in a two-step reaction: L-threonine is first activated by ATP to form Thr-AMP and then transferred to the acceptor end of tRNA(Thr). Also edits incorrectly charged L-seryl-tRNA(Thr). This chain is Threonine--tRNA ligase, found in Campylobacter lari (strain RM2100 / D67 / ATCC BAA-1060).